Here is a 264-residue protein sequence, read N- to C-terminus: 3-methyl-2-oxobutanoate hydroxymethyltransferase (264 aa).

Residues D45 and D84 each coordinate Mg(2+). 3-methyl-2-oxobutanoate is bound by residues 45 to 46 (DS), D84, and K112. E114 lines the Mg(2+) pocket. E181 functions as the Proton acceptor in the catalytic mechanism.

Belongs to the PanB family. In terms of assembly, homodecamer; pentamer of dimers. Requires Mg(2+) as cofactor.

It is found in the cytoplasm. The enzyme catalyses 3-methyl-2-oxobutanoate + (6R)-5,10-methylene-5,6,7,8-tetrahydrofolate + H2O = 2-dehydropantoate + (6S)-5,6,7,8-tetrahydrofolate. It participates in cofactor biosynthesis; (R)-pantothenate biosynthesis; (R)-pantoate from 3-methyl-2-oxobutanoate: step 1/2. Functionally, catalyzes the reversible reaction in which hydroxymethyl group from 5,10-methylenetetrahydrofolate is transferred onto alpha-ketoisovalerate to form ketopantoate. The protein is 3-methyl-2-oxobutanoate hydroxymethyltransferase of Shewanella sp. (strain ANA-3).